Here is a 366-residue protein sequence, read N- to C-terminus: Tetraacyldisaccharide 4'-kinase (366 aa).

T65–T72 is a binding site for ATP. A disordered region spans residues A343 to A366. Over residues N356–A366 the composition is skewed to basic and acidic residues.

Belongs to the LpxK family.

It carries out the reaction a lipid A disaccharide + ATP = a lipid IVA + ADP + H(+). It functions in the pathway glycolipid biosynthesis; lipid IV(A) biosynthesis; lipid IV(A) from (3R)-3-hydroxytetradecanoyl-[acyl-carrier-protein] and UDP-N-acetyl-alpha-D-glucosamine: step 6/6. Its function is as follows. Transfers the gamma-phosphate of ATP to the 4'-position of a tetraacyldisaccharide 1-phosphate intermediate (termed DS-1-P) to form tetraacyldisaccharide 1,4'-bis-phosphate (lipid IVA). The polypeptide is Tetraacyldisaccharide 4'-kinase (Cupriavidus pinatubonensis (strain JMP 134 / LMG 1197) (Cupriavidus necator (strain JMP 134))).